Reading from the N-terminus, the 200-residue chain is Putative protein ATXN8OS (200 aa).

The tract at residues 19 to 39 is disordered; the sequence is PFSGLKEEEEEDGEDDEEEEE. The span at 25-39 shows a compositional bias: acidic residues; it reads EEEEEDGEDDEEEEE.

Expressed in brain. Expressed in muscle tissues (at protein level).

Its subcellular location is the cytoplasm. This is Putative protein ATXN8OS from Homo sapiens (Human).